Reading from the N-terminus, the 327-residue chain is Zinc transport protein ZntB (327 aa).

The Cytoplasmic segment spans residues 1-273 (MEAIKGSDVN…ARRTYTMSLM (273 aa)). A helical membrane pass occupies residues 274–294 (AMVFLPSTFLTGLFGVNLGGI). Over 295–300 (PGGGWR) the chain is Periplasmic. Residues 301-321 (FGFSLFCILLVVLIGGVTLWL) traverse the membrane as a helical segment. The Cytoplasmic segment spans residues 322–327 (HRSKWL).

Belongs to the CorA metal ion transporter (MIT) (TC 1.A.35) family.

The protein resides in the cell inner membrane. It catalyses the reaction Zn(2+)(out) + H(+)(out) = Zn(2+)(in) + H(+)(in). Its function is as follows. Zinc transporter. Acts as a Zn(2+):proton symporter, which likely mediates zinc ion uptake. In Salmonella choleraesuis (strain SC-B67), this protein is Zinc transport protein ZntB.